The primary structure comprises 257 residues: Probable enoyl-CoA hydratase (257 aa).

It belongs to the enoyl-CoA hydratase/isomerase family.

The enzyme catalyses a (3S)-3-hydroxyacyl-CoA = a (2E)-enoyl-CoA + H2O. It carries out the reaction a 4-saturated-(3S)-3-hydroxyacyl-CoA = a (3E)-enoyl-CoA + H2O. Could possibly oxidize fatty acids using specific components. The polypeptide is Probable enoyl-CoA hydratase (fadB1) (Rhizobium meliloti (strain 1021) (Ensifer meliloti)).